The primary structure comprises 143 residues: uncharacterized protein (143 aa).

The protein localises to the cytoplasm. Its subcellular location is the nucleus. This is an uncharacterized protein from Schizosaccharomyces pombe (strain 972 / ATCC 24843) (Fission yeast).